We begin with the raw amino-acid sequence, 212 residues long: Pyridoxine/pyridoxamine 5'-phosphate oxidase (212 aa).

Residues 57-62 (RMVLLK), 72-73 (YT), Arg78, Lys79, and Gln101 contribute to the FMN site. Lys62 contacts substrate. Tyr119, Arg123, and Ser127 together coordinate substrate. Residues 136–137 (QS) and Trp181 contribute to the FMN site. Substrate is bound at residue 187-189 (RLH). Position 191 (Arg191) interacts with FMN.

The protein belongs to the pyridoxamine 5'-phosphate oxidase family. In terms of assembly, homodimer. It depends on FMN as a cofactor.

The catalysed reaction is pyridoxamine 5'-phosphate + O2 + H2O = pyridoxal 5'-phosphate + H2O2 + NH4(+). The enzyme catalyses pyridoxine 5'-phosphate + O2 = pyridoxal 5'-phosphate + H2O2. It functions in the pathway cofactor metabolism; pyridoxal 5'-phosphate salvage; pyridoxal 5'-phosphate from pyridoxamine 5'-phosphate: step 1/1. It participates in cofactor metabolism; pyridoxal 5'-phosphate salvage; pyridoxal 5'-phosphate from pyridoxine 5'-phosphate: step 1/1. Catalyzes the oxidation of either pyridoxine 5'-phosphate (PNP) or pyridoxamine 5'-phosphate (PMP) into pyridoxal 5'-phosphate (PLP). The chain is Pyridoxine/pyridoxamine 5'-phosphate oxidase from Erythrobacter litoralis (strain HTCC2594).